Here is a 53-residue protein sequence, read N- to C-terminus: ATP synthase protein 8 (53 aa).

The chain crosses the membrane as a helical span at residues 5–25; sequence APISWLTLFFVFSITLVIFNI.

It belongs to the ATPase protein 8 family. As to quaternary structure, F-type ATPases have 2 components, CF(1) - the catalytic core - and CF(0) - the membrane proton channel.

Its subcellular location is the mitochondrion membrane. In terms of biological role, mitochondrial membrane ATP synthase (F(1)F(O) ATP synthase or Complex V) produces ATP from ADP in the presence of a proton gradient across the membrane which is generated by electron transport complexes of the respiratory chain. F-type ATPases consist of two structural domains, F(1) - containing the extramembraneous catalytic core and F(0) - containing the membrane proton channel, linked together by a central stalk and a peripheral stalk. During catalysis, ATP synthesis in the catalytic domain of F(1) is coupled via a rotary mechanism of the central stalk subunits to proton translocation. Part of the complex F(0) domain. Minor subunit located with subunit a in the membrane. This is ATP synthase protein 8 from Aedes aegypti (Yellowfever mosquito).